We begin with the raw amino-acid sequence, 668 residues long: Potassium-transporting ATPase ATP-binding subunit (668 aa).

4 helical membrane-spanning segments follow: residues 31-51 (MFLTEVSLFVSIFIYIFPSFF), 62-82 (FYVAVVVLLFLTVFFSSISTA), 213-233 (TVFLSGLTLIFLVITASIFAI), and 243-263 (IVMLIVLLIALIPTTIGALLP). The active-site 4-aspartylphosphate intermediate is the Asp-298. Residues Asp-335, Glu-339, 367 to 374 (FSSETKFS), and Lys-385 contribute to the ATP site. Residues Asp-504 and Asp-508 each coordinate Mg(2+). The next 3 membrane-spanning stretches (helical) occupy residues 573–593 (YFVIIPAIFYMFPSLSLVNIL), 599–619 (IVAVTSALIFNTIIIVFLIPL), and 644–664 (IGGVITPFIAIKLIYMLLIAW).

The protein belongs to the cation transport ATPase (P-type) (TC 3.A.3) family. Type IA subfamily. In terms of assembly, the system is composed of three essential subunits: KdpA, KdpB and KdpC.

The protein localises to the cell membrane. The enzyme catalyses K(+)(out) + ATP + H2O = K(+)(in) + ADP + phosphate + H(+). Its function is as follows. Part of the high-affinity ATP-driven potassium transport (or Kdp) system, which catalyzes the hydrolysis of ATP coupled with the electrogenic transport of potassium into the cytoplasm. This subunit is responsible for energy coupling to the transport system and for the release of the potassium ions to the cytoplasm. The polypeptide is Potassium-transporting ATPase ATP-binding subunit (Thermoplasma volcanium (strain ATCC 51530 / DSM 4299 / JCM 9571 / NBRC 15438 / GSS1)).